Here is a 412-residue protein sequence, read N- to C-terminus: Class E basic helix-loop-helix protein 40 (412 aa).

Positions 1 to 21 are disordered; sequence MERIPSAQPPPTCLPKAPGLE. The essential for interaction with BMAL1, E-box binding and repressor activity against the CLOCK-BMAL1 heterodimer stretch occupies residues 1–139; sequence MERIPSAQPP…LSGRNVEAGQ (139 aa). The 56-residue stretch at 52-107 folds into the bHLH domain; sequence TYKLPHRLIEKKRRDRINECIAQLKDLLPEHLKLTTLGHLEKAVVLELTLKHVKAL. Residues 75–79 are necessary for interaction with RXRA and repressor activity against RXRA; it reads LKDLL. Residues 142 to 175 form the Orange domain; sequence FCSGFQTCAREVLQYLAKHENTRDLKSSQLVTHL. A Glycyl lysine isopeptide (Lys-Gly) (interchain with G-Cter in SUMO1, SUMO2 and SUMO3) cross-link involves residue Lys159. Residue Lys167 forms a Glycyl lysine isopeptide (Lys-Gly) (interchain with G-Cter in SUMO2) linkage. Disordered stretches follow at residues 182–256 and 279–298; these read LLQG…ELRV and KQES…SDDE. Position 235 is a phosphoserine (Ser235). Lys279 participates in a covalent cross-link: Glycyl lysine isopeptide (Lys-Gly) (interchain with G-Cter in SUMO1); alternate. Lys279 participates in a covalent cross-link: Glycyl lysine isopeptide (Lys-Gly) (interchain with G-Cter in SUMO1, SUMO2 and SUMO3); alternate. Lys279 participates in a covalent cross-link: Glycyl lysine isopeptide (Lys-Gly) (interchain with G-Cter in SUMO2); alternate. Lys288 participates in a covalent cross-link: Glycyl lysine isopeptide (Lys-Gly) (interchain with G-Cter in SUMO2). Position 383 is a phosphoserine (Ser383).

As to quaternary structure, homodimer. Heterodimer with BHLHE41/DEC2. Interacts with TCF3/E47. Interacts with ubiquitin-conjugating enzyme UBE2I/UBC9. Interacts with HDAC1, SUMO1, RXRA and BMAL1. In terms of processing, ubiquitinated; which may lead to proteasomal degradation. Post-translationally, sumoylation inhibits its ubiquitination and promotes its negative regulation of the CLOCK-BMAL1 heterodimer transcriptional activator activity.

The protein localises to the cytoplasm. It localises to the nucleus. Its function is as follows. Transcriptional repressor involved in the regulation of the circadian rhythm by negatively regulating the activity of the clock genes and clock-controlled genes. Acts as the negative limb of a novel autoregulatory feedback loop (DEC loop) which differs from the one formed by the PER and CRY transcriptional repressors (PER/CRY loop). Both these loops are interlocked as it represses the expression of PER1/2 and in turn is repressed by PER1/2 and CRY1/2. Represses the activity of the circadian transcriptional activator: CLOCK-BMAL1|BMAL2 heterodimer by competing for the binding to E-box elements (5'-CACGTG-3') found within the promoters of its target genes. Negatively regulates its own expression and the expression of DBP and BHLHE41/DEC2. Acts as a corepressor of RXR and the RXR-LXR heterodimers and represses the ligand-induced RXRA and NR1H3/LXRA transactivation activity. May be involved in the regulation of chondrocyte differentiation via the cAMP pathway. Represses the transcription of NR0B2 and attentuates the transactivation of NR0B2 by the CLOCK-BMAL1 complex. Drives the circadian rhythm of blood pressure through transcriptional repression of ATP1B1 in the cardiovascular system. This chain is Class E basic helix-loop-helix protein 40 (BHLHE40), found in Bos taurus (Bovine).